A 324-amino-acid polypeptide reads, in one-letter code: Phospho-N-acetylmuramoyl-pentapeptide-transferase (324 aa).

Transmembrane regions (helical) follow at residues 5–25 (GLLVTAGVAFLISVALSPLFI), 52–72 (PTMGGIVIYVSMMVTTLIMAI), 77–97 (LGAEVSLLLLVTFGYGLIGFL), 122–142 (VIAIAFFLIGKGQAFHTYIMI), 149–169 (FELGWAYFVLVLFMLIGGSNA), 176–196 (LDGLLSGTAAIAFGAFSIIAV), 201–221 (FGVAIFCMAVVGAVLGFLVFN), 227–247 (VFMGDTGSLALGGAIAAVAIL), 253–273 (LLVIIGGVFVAETLSVIIQVI), and 302–322 (VVVTFWSVGFLLAVLGIYIGV).

Belongs to the glycosyltransferase 4 family. MraY subfamily. Mg(2+) is required as a cofactor.

It localises to the cell membrane. It carries out the reaction UDP-N-acetyl-alpha-D-muramoyl-L-alanyl-gamma-D-glutamyl-meso-2,6-diaminopimeloyl-D-alanyl-D-alanine + di-trans,octa-cis-undecaprenyl phosphate = di-trans,octa-cis-undecaprenyl diphospho-N-acetyl-alpha-D-muramoyl-L-alanyl-D-glutamyl-meso-2,6-diaminopimeloyl-D-alanyl-D-alanine + UMP. It functions in the pathway cell wall biogenesis; peptidoglycan biosynthesis. Functionally, catalyzes the initial step of the lipid cycle reactions in the biosynthesis of the cell wall peptidoglycan: transfers peptidoglycan precursor phospho-MurNAc-pentapeptide from UDP-MurNAc-pentapeptide onto the lipid carrier undecaprenyl phosphate, yielding undecaprenyl-pyrophosphoryl-MurNAc-pentapeptide, known as lipid I. The polypeptide is Phospho-N-acetylmuramoyl-pentapeptide-transferase (Bacillus mycoides (strain KBAB4) (Bacillus weihenstephanensis)).